A 217-amino-acid chain; its full sequence is MQFSSSSRTSDENVDYLFKVILIGDSNVGKTCVVQHFKSGVYSESQQNTIGVDFTVRSLEIDGKKVKMQVWDTAGQERFRTITQSYYRSAHAAIIAYDLTRRSTFESVPHWIHEIEKYGAANLVIMLIGNKSDLWEKRHVLFEDACTLAEKHGLLAVLETSAKESRNIDEVFVLMAKELIARNSLHLYGESAQQGLSQDSSPVLVAQVPNESTRCTC.

Ser26, Val28, Gly29, Lys30, Thr31, Cys32, Tyr42, Ser43, Glu44, Ser45, and Thr49 together coordinate GTP. Thr31 lines the Mg(2+) pocket. Residues 39–54 (SGVYSESQQNTIGVDF) carry the Switch 1 motif. 2 residues coordinate Mg(2+): Thr49 and Asp72. The Switch 2 signature appears at 74 to 89 (AGQERFRTITQSYYRS). The GTP site is built by Gly75, Asn130, Lys131, Asp133, Ser161, Ala162, and Lys163. 2 S-geranylgeranyl cysteine lipidation sites follow: Cys215 and Cys217. Cysteine methyl ester is present on Cys217.

This sequence belongs to the small GTPase superfamily. Rab family. Requires Mg(2+) as cofactor. Expressed in a tissue-specific manner. Detected at high levels in intestine, lung and spleen, and at a lower level in kidney.

The protein localises to the cell membrane. It carries out the reaction GTP + H2O = GDP + phosphate + H(+). Regulated by guanine nucleotide exchange factors (GEFs) which promote the exchange of bound GDP for free GTP. Regulated by GTPase activating proteins (GAPs) which increase the GTP hydrolysis activity. Inhibited by GDP dissociation inhibitors (GDIs). The small GTPases Rab are key regulators of intracellular membrane trafficking, from the formation of transport vesicles to their fusion with membranes. Rabs cycle between an inactive GDP-bound form and an active GTP-bound form that is able to recruit to membranes different set of downstream effectors directly responsible for vesicle formation, movement, tethering and fusion. The polypeptide is Ras-related protein Rab-19 (Mus musculus (Mouse)).